Reading from the N-terminus, the 331-residue chain is (E)-beta farnesene synthase MBR_03882 (331 aa).

This sequence belongs to the trichodiene synthase family.

The catalysed reaction is (2E,6E)-farnesyl diphosphate = (E)-beta-farnesene + diphosphate. Functionally, terpene synthase that catalyzes the conversion of (2E,6E)-farnesyl diphosphate (FPP) into the volatile sesquiterpene (E)-beta-farnesene. The protein is (E)-beta farnesene synthase MBR_03882 of Metarhizium brunneum (strain ARSEF 3297).